Consider the following 191-residue polypeptide: MLKKTLAALALGSALFTAGQAMAADYKIDKEGQHAFIEFRIKHLGYSWLYGRFNDFDGSFTFDEKNPSADKVKVTINTNSVDTNHAERDKHLRSGDFLNVSKNPTATFESTEVKANGDSADITGNLTLNGVTKPVTIKAKLIGQGDDPWGGYRAGFEGSATLKLKDFGIKMDLGPASQEVELLLSVEGIRQ.

Positions 1-23 (MLKKTLAALALGSALFTAGQAMA) are cleaved as a signal peptide.

Belongs to the UPF0312 family. Type 1 subfamily.

It localises to the periplasm. This chain is UPF0312 protein PA0423, found in Pseudomonas aeruginosa (strain ATCC 15692 / DSM 22644 / CIP 104116 / JCM 14847 / LMG 12228 / 1C / PRS 101 / PAO1).